The chain runs to 288 residues: Beta-lactamase PSE-4 (288 aa).

Residues 1 to 17 form the signal peptide; sequence MKFLLAFSLLIPSVVFA. S65 (acyl-ester intermediate) is an active-site residue. The cysteines at positions 72 and 118 are disulfide-linked. A substrate-binding site is contributed by 229 to 231; it reads RSG.

Belongs to the class-A beta-lactamase family.

It catalyses the reaction a beta-lactam + H2O = a substituted beta-amino acid. In terms of biological role, hydrolyzes both carbenicillin and oxacillin. This Pseudomonas aeruginosa protein is Beta-lactamase PSE-4 (pse4).